We begin with the raw amino-acid sequence, 32 residues long: uncharacterized protein (32 aa).

Residues 3–23 traverse the membrane as a helical segment; the sequence is IGIIFPVVIFITAVVFLAWFF.

Its subcellular location is the cell inner membrane. This is an uncharacterized protein from Escherichia coli (strain K12).